The primary structure comprises 378 residues: Odorant receptor 45a (378 aa).

Over 1-30 (MDASYFAVQRRALEIVGFDPSTPQLSLKHP) the chain is Cytoplasmic. The helical transmembrane segment at 31–51 (IWAGILILSLISHNWPMVVYA) threads the bilayer. The Extracellular portion of the chain corresponds to 52 to 129 (LQDLSDLTRL…RYVARSFRNA (78 aa)). A helical membrane pass occupies residues 130–150 (AYGVICASAIAPMLLGLWGYV). The Cytoplasmic portion of the chain corresponds to 151 to 173 (ETGVFTPTTPMEFNFWLDERKPH). Residues 174–194 (FYWPIYVWGVLGVAAAAWLAI) form a helical membrane-spanning segment. Topologically, residues 195–197 (ATD) are extracellular. The chain crosses the membrane as a helical span at residues 198-218 (TLFSWLTHNVVIQFQLLELVL). Residues 219 to 249 (EEKDLNGGDSRLTGFVSRHRIALDLAKELSS) lie on the Cytoplasmic side of the membrane. The chain crosses the membrane as a helical span at residues 250–270 (IFGEIVFVKYMLSYLQLCMLA). Topologically, residues 271–285 (FRFSRSGWSAQVPFR) are extracellular. A helical membrane pass occupies residues 286 to 306 (ATFLVAIIIQLSSYCYGGEYI). Over 307–342 (KQQSLAIAQAVYGQINWPEMTPKKRRLWQMVIMRAQ) the chain is Cytoplasmic. Residues 343–363 (RPAKIFGFMFVVDLPLLLWVI) traverse the membrane as a helical segment. At 364–378 (RTAGSFLAMLRTFER) the chain is on the extracellular side.

The protein belongs to the insect chemoreceptor superfamily. Heteromeric odorant receptor channel (TC 1.A.69) family. Or1a subfamily. As to quaternary structure, interacts with Orco. Complexes exist early in the endomembrane system in olfactory sensory neurons (OSNs), coupling these complexes to the conserved ciliary trafficking pathway.

The protein resides in the cell membrane. Its function is as follows. Odorant receptor which mediates acceptance or avoidance behavior, depending on its substrates. The odorant receptor repertoire encodes a large collection of odor stimuli that vary widely in identity, intensity, and duration. May form a complex with Orco to form odorant-sensing units, providing sensitive and prolonged odorant signaling and calcium permeability. Involved in the behavioral responses to hexanol, pentyl acetate, benzyl acetate, and 2-heptanone. This is Odorant receptor 45a (Or45a) from Drosophila melanogaster (Fruit fly).